A 441-amino-acid polypeptide reads, in one-letter code: Putative transporter AmpG 1 (441 aa).

The next 12 helical transmembrane spans lie at 5-25 (SHLL…MITG), 42-62 (IGIL…APIF), 78-98 (LSWI…FSFL), 104-124 (LVLF…QDTI), 143-163 (GIYI…AIYL), 171-191 (EIYK…IVAA), 249-269 (SGND…LVLY), 297-317 (VGKF…GFIM), 325-345 (SIFL…FLEI), 352-372 (LLFI…TAYI), 390-410 (FLSS…GYMV), and 413-433 (FGWQ…LLIL).

This sequence belongs to the major facilitator superfamily.

It is found in the cell inner membrane. This chain is Putative transporter AmpG 1 (ampG1), found in Rickettsia felis (strain ATCC VR-1525 / URRWXCal2) (Rickettsia azadi).